A 557-amino-acid chain; its full sequence is Urocanate hydratase (557 aa).

NAD(+)-binding positions include 53–54 (GG), Q131, 177–179 (GMG), E197, R202, 243–244 (NA), 264–268 (QTSAH), 274–275 (YL), and Y323. The active site involves C411. NAD(+) is bound at residue G493.

This sequence belongs to the urocanase family. NAD(+) serves as cofactor.

Its subcellular location is the cytoplasm. It catalyses the reaction 4-imidazolone-5-propanoate = trans-urocanate + H2O. It functions in the pathway amino-acid degradation; L-histidine degradation into L-glutamate; N-formimidoyl-L-glutamate from L-histidine: step 2/3. Catalyzes the conversion of urocanate to 4-imidazolone-5-propionate. This is Urocanate hydratase from Pseudomonas putida (strain ATCC 700007 / DSM 6899 / JCM 31910 / BCRC 17059 / LMG 24140 / F1).